The chain runs to 122 residues: Cupin 2 conserved barrel domain-containing protein (122 aa).

The cupin 2 conserved barrel stretch occupies residues 55 to 119 (PGGVTTAEDH…DSPVEIVSIW (65 aa)). Residues Asp-63, His-65, Glu-69, and His-103 each contribute to the Zn(2+) site.

Requires Zn(2+) as cofactor.

It carries out the reaction N(6)-hydroxy-L-lysine + L-glutamate + ATP = 1-L-glutamo-2-N(6-)L-lysinohydrazine + AMP + diphosphate + 2 H(+). Its activity is regulated as follows. Inhibited by 1,10-phenanthroline (OP). Functionally, catalyzes hydrazine (N-N) bond formation from an unstable ester intermediate, the product of the ATP-dependent condensation of L-N(6)-OH-lysine and L-glutamine substrates by a methionyl-tRNA synthase-like protein. The polypeptide is Cupin 2 conserved barrel domain-containing protein (Rhodococcus jostii (strain RHA1)).